Consider the following 778-residue polypeptide: Jhy protein homolog (778 aa).

Disordered stretches follow at residues 62–271, 334–408, 631–654, and 721–746; these read DRIR…PKTD, QYES…LDTS, EKGKKHKKRSSSKNTKLKGYQKRD, and IPKPKPSNLTHQASKEQKNPTYAGKE. The span at 118-139 shows a compositional bias: basic and acidic residues; the sequence is PIEDKYSDLRYDPNWKSKKEEG. Over residues 223–234 the composition is skewed to low complexity; the sequence is SSLSPYVKSSSS. Polar residues predominate over residues 334–344; that stretch reads QYESTKSSNVP. A compositionally biased stretch (basic residues) spans 358–371; it reads SRRPAKLKIRKQCK. Residues 375-389 show a composition bias toward polar residues; it reads GLKSSTTEEVTASQG. The segment covering 390 to 402 has biased composition (low complexity); sequence NQNNPPRQQQNQN. The span at 633-650 shows a compositional bias: basic residues; the sequence is GKKHKKRSSSKNTKLKGY. Over residues 733-746 the composition is skewed to basic and acidic residues; sequence ASKEQKNPTYAGKE.

Required for the normal development of cilia in brain ependymal cells lining the ventricular surfaces. This is Jhy protein homolog from Homo sapiens (Human).